The following is a 454-amino-acid chain: Transcription factor efuD (454 aa).

Positions 4 to 111 (AKELIRITAR…NYHRAIDSIK (108 aa)) constitute an HTH TFE/IIEalpha-type domain. Residues 327–454 (LRTDDDGAMD…DEDELEFEDI (128 aa)) are disordered. Residues 353–372 (DQDEEEEEEDDDDDEFEDVD) show a composition bias toward acidic residues. Polar residues predominate over residues 387–401 (SVSTPATSAQVSSTA). Residues 423 to 437 (APAAAASSQAAAAES) show a composition bias toward low complexity. Positions 442 to 454 (SDEDEDELEFEDI) are enriched in acidic residues.

The protein belongs to the TFIIE alpha subunit family.

The protein localises to the nucleus. Its function is as follows. Transcription factor; part of the gene cluster that mediates the biosynthesis of enfumafungin, a glycosylated fernene-type triterpenoid with potent antifungal activity, mediated by its interaction with beta-1,3-glucan synthase and the fungal cell wall. Is possibly responsible for the transcription regulation of one or more genes within the gene cluster. The protein is Transcription factor efuD of Hormonema carpetanum.